Reading from the N-terminus, the 292-residue chain is ATP synthase gamma chain (292 aa).

Belongs to the ATPase gamma chain family. In terms of assembly, F-type ATPases have 2 components, CF(1) - the catalytic core - and CF(0) - the membrane proton channel. CF(1) has five subunits: alpha(3), beta(3), gamma(1), delta(1), epsilon(1). CF(0) has three main subunits: a, b and c.

It localises to the cell inner membrane. Produces ATP from ADP in the presence of a proton gradient across the membrane. The gamma chain is believed to be important in regulating ATPase activity and the flow of protons through the CF(0) complex. The protein is ATP synthase gamma chain of Nitrobacter winogradskyi (strain ATCC 25391 / DSM 10237 / CIP 104748 / NCIMB 11846 / Nb-255).